A 391-amino-acid chain; its full sequence is Phosphoglycerate kinase (391 aa).

Residues 21-23 (DLN), R36, 59-62 (HLGR), R113, and R146 each bind substrate. Residues K197, E319, and 345–348 (GGDT) contribute to the ATP site.

The protein belongs to the phosphoglycerate kinase family. Monomer.

Its subcellular location is the cytoplasm. The catalysed reaction is (2R)-3-phosphoglycerate + ATP = (2R)-3-phospho-glyceroyl phosphate + ADP. The protein operates within carbohydrate degradation; glycolysis; pyruvate from D-glyceraldehyde 3-phosphate: step 2/5. The chain is Phosphoglycerate kinase from Xanthomonas euvesicatoria pv. vesicatoria (strain 85-10) (Xanthomonas campestris pv. vesicatoria).